Here is a 355-residue protein sequence, read N- to C-terminus: Serum paraoxonase/arylesterase 1 (355 aa).

A disulfide bridge connects residues C42 and C353. The Ca(2+) site is built by E53 and D54. The Proton acceptor role is filled by H115. The Ca(2+) site is built by I117, N168, D169, and N224. A glycan (N-linked (GlcNAc...) asparagine) is linked at N253. D269 and N270 together coordinate Ca(2+). Residues N270 and N324 are each glycosylated (N-linked (GlcNAc...) asparagine).

It belongs to the paraoxonase family. In terms of assembly, homodimer. Interacts with CLU. Requires Ca(2+) as cofactor. Post-translationally, the signal sequence is not cleaved. Plasma, liver, kidney, heart, brain, small intestine and lung. In the plasma, associated with HDL.

Its subcellular location is the secreted. The protein resides in the extracellular space. The catalysed reaction is a phenyl acetate + H2O = a phenol + acetate + H(+). The enzyme catalyses An aryl dialkyl phosphate + H2O = dialkyl phosphate + an aryl alcohol.. It catalyses the reaction an N-acyl-L-homoserine lactone + H2O = an N-acyl-L-homoserine + H(+). Its function is as follows. Hydrolyzes the toxic metabolites of a variety of organophosphorus insecticides. Capable of hydrolyzing a broad spectrum of organophosphate substrates and lactones, and a number of aromatic carboxylic acid esters. Mediates an enzymatic protection of low density lipoproteins against oxidative modification. The chain is Serum paraoxonase/arylesterase 1 (Pon1) from Mus musculus (Mouse).